The chain runs to 284 residues: Homeobox protein SMOX-5 (284 aa).

The segment at residues 37–96 is a DNA-binding region (homeobox); the sequence is RRKTRTTFSNCQLNELENNFNRQRYLTPTDRDRIAKHLGLTNTQVITWFQNRRAKLKREA. The interval 117–172 is disordered; the sequence is LSLSDHDHEETQIDDENEQGDNNNDDDGDDNDVEEDDGEEQEKNHTKYLTQPPSIS. Positions 128 to 156 are enriched in acidic residues; that stretch reads QIDDENEQGDNNNDDDGDDNDVEEDDGEE.

The protein resides in the nucleus. This is Homeobox protein SMOX-5 (SMOX-5) from Schistosoma mansoni (Blood fluke).